The chain runs to 727 residues: MDAKVEDNIAGKCPMGHGRGPANRDWWPQSLRLEGLNQHAPRSNPMGEAFDYAEAFKSLDLDAVVSDLHALMTDSQEWWPADFGHYGGLFIRLAWHAAGTYRITDGRGGAGGGQQRFAPLNSWPDNTNLDKARRLLWPIKQKYGAKLSWADLYVLVGNVALESMGFKTFGFAGGRADQWEPEELYWGPESTWLDDKRYSGERELDSPLGAVQMGLIYVNPEGPNGNPDPLASARDIRETFARMAMNDEETVALIAGGHTFGKAHGAGDASLVGVEPEGGAIEAQGFGWASKHGTGKGPDAITGGPEVIWTQTPTRWSNHFFDNLFKYEWELTQSPAGAKQWQAKNAPADIPDAFDPNKTHVPRMLTSDLALRFDPAYEKISRRFYENPDQFADAFARAWFKLTHRDMGPIGRYLGPLVPKEELIWQDPIPAVDHPLADDKDIAALKAKILATGLSASDLVSTAWASASTYRQSDKRGGANGARIRLAPQKDWAVNNPPVLAKVLAALEGVQKDFNASAGGGKKISLADLIVLGGAAAIEKAAKDAGTSVTVPFAPGRMDASAEQTDAHSFEALEPRSDGFRNYRGPGKHYMAPEEALVDRAQLLGLSGPELTVLVGGLRVLGANADGSKDGVFTNRPGALSNDFFVNLLSMETTWSPTAANAFAGHDRKSSEPRWTATRVDLIFGSHAELRAFAEVYACADSQEKFVCDFVTAWNKVMNADRLDLAA.

Residues M1 to P21 are disordered. Residues W95–Y217 constitute a cross-link (tryptophyl-tyrosyl-methioninium (Trp-Tyr) (with M-243)). Catalysis depends on H96, which acts as the Proton acceptor. The tryptophyl-tyrosyl-methioninium (Tyr-Met) (with W-95) cross-link spans Y217–M243. H258 provides a ligand contact to heme b.

The protein belongs to the peroxidase family. Peroxidase/catalase subfamily. Homodimer or homotetramer. The cofactor is heme b. Post-translationally, formation of the three residue Trp-Tyr-Met cross-link is important for the catalase, but not the peroxidase activity of the enzyme.

It carries out the reaction H2O2 + AH2 = A + 2 H2O. The catalysed reaction is 2 H2O2 = O2 + 2 H2O. In terms of biological role, bifunctional enzyme with both catalase and broad-spectrum peroxidase activity. Important for stationary phase survival. The sequence is that of Catalase-peroxidase from Caulobacter vibrioides (strain ATCC 19089 / CIP 103742 / CB 15) (Caulobacter crescentus).